The chain runs to 216 residues: Large ribosomal subunit protein uL3 (216 aa).

Residues 137–158 form a disordered region; the sequence is GASHGAHKNHRKPGSIGGASTP.

This sequence belongs to the universal ribosomal protein uL3 family. Part of the 50S ribosomal subunit. Forms a cluster with proteins L14 and L19.

In terms of biological role, one of the primary rRNA binding proteins, it binds directly near the 3'-end of the 23S rRNA, where it nucleates assembly of the 50S subunit. This Arthrobacter sp. (strain FB24) protein is Large ribosomal subunit protein uL3.